Consider the following 65-residue polypeptide: MPKMKTKKSVAKRFKLTGTGKLKRAQAFKSHILTKKSRKTKRNLRKTAYVSETQEKVMKKLLPYV.

It belongs to the bacterial ribosomal protein bL35 family.

In Clostridium kluyveri (strain NBRC 12016), this protein is Large ribosomal subunit protein bL35.